An 81-amino-acid polypeptide reads, in one-letter code: Photosystem I iron-sulfur center (81 aa).

4Fe-4S ferredoxin-type domains follow at residues serine 2–tryptophan 31 and glycine 37–tyrosine 68. [4Fe-4S] cluster is bound by residues cysteine 11, cysteine 14, cysteine 17, cysteine 21, cysteine 48, cysteine 51, cysteine 54, and cysteine 58.

As to quaternary structure, the cyanobacterial PSI reaction center is composed of one copy each of PsaA,B,C,D,E,F,I,J,K,L,M and X, and forms trimeric complexes. It depends on [4Fe-4S] cluster as a cofactor.

The protein resides in the cellular thylakoid membrane. The enzyme catalyses reduced [plastocyanin] + hnu + oxidized [2Fe-2S]-[ferredoxin] = oxidized [plastocyanin] + reduced [2Fe-2S]-[ferredoxin]. Apoprotein for the two 4Fe-4S centers FA and FB of photosystem I (PSI); essential for photochemical activity. FB is the terminal electron acceptor of PSI, donating electrons to ferredoxin. The C-terminus interacts with PsaA/B/D and helps assemble the protein into the PSI complex. Required for binding of PsaD and PsaE to PSI. PSI is a plastocyanin/cytochrome c6-ferredoxin oxidoreductase, converting photonic excitation into a charge separation, which transfers an electron from the donor P700 chlorophyll pair to the spectroscopically characterized acceptors A0, A1, FX, FA and FB in turn. The polypeptide is Photosystem I iron-sulfur center (Synechococcus sp. (strain WH8103)).